The following is a 391-amino-acid chain: Succinyl-diaminopimelate desuccinylase (391 aa).

His67 is a binding site for Zn(2+). Asp69 is a catalytic residue. Asp101 is a Zn(2+) binding site. The Proton acceptor role is filled by Glu135. Glu136, Glu164, and His353 together coordinate Zn(2+).

It belongs to the peptidase M20A family. DapE subfamily. In terms of assembly, homodimer. It depends on Zn(2+) as a cofactor. Requires Co(2+) as cofactor.

The enzyme catalyses N-succinyl-(2S,6S)-2,6-diaminopimelate + H2O = (2S,6S)-2,6-diaminopimelate + succinate. It participates in amino-acid biosynthesis; L-lysine biosynthesis via DAP pathway; LL-2,6-diaminopimelate from (S)-tetrahydrodipicolinate (succinylase route): step 3/3. Functionally, catalyzes the hydrolysis of N-succinyl-L,L-diaminopimelic acid (SDAP), forming succinate and LL-2,6-diaminopimelate (DAP), an intermediate involved in the bacterial biosynthesis of lysine and meso-diaminopimelic acid, an essential component of bacterial cell walls. The chain is Succinyl-diaminopimelate desuccinylase from Rickettsia bellii (strain OSU 85-389).